Consider the following 445-residue polypeptide: Type II methyltransferase M.Bpa9945I (445 aa).

The 444-residue stretch at 1-444 (MIVIDLFSGA…RAVKDVINGH (444 aa)) folds into the SAM-dependent MTase C5-type domain. Cys-136 is a catalytic residue.

Belongs to the class I-like SAM-binding methyltransferase superfamily. C5-methyltransferase family.

It localises to the cytoplasm. The enzyme catalyses a 2'-deoxycytidine in DNA + S-adenosyl-L-methionine = a 5-methyl-2'-deoxycytidine in DNA + S-adenosyl-L-homocysteine + H(+). In terms of biological role, component of antiviral defense system DISARM (defense island system associated with restriction-modification), composed of DrmE, DrmA, DrmB, DrmC and DrmMII. DISARM is probably a multi-gene restriction module, this subunit is a DNA methylase. Expression of DISARM in B.subtilis (strain BEST7003) confers resistance to phages Nf, phi29, phi105, phi3T, SPO1, SPR and SPP1. Protection is over 10(7)-fold against phi3T, 10(4)-10(5)-fold against Nf, phi29, phi105 and SPR, 100-fold against SPO1 and 10-fold against SPP1. DISARM does not interfere with phage adsorption, but instead interferes with (phi3T) DNA replication early in its cycle, preventing replication, circularization and lysogeny and probably causes phage DNA degradation (DNA is degraded in SPP1-infected cells). Expression of this methylase alone leads to highly methylated phage, however they are still susceptible to the DISARM system. A methylase, recognizes the double-stranded sequence 5'-CCWGG-3', methylates C-2 on both strands. Phage Nf does not have any 5'-CCWGG-3' motifs but is still targeted by the DISARM system. This Bacillus paralicheniformis (strain ATCC 9945a / NCIMB 11709 / CD-2) protein is Type II methyltransferase M.Bpa9945I.